Here is a 177-residue protein sequence, read N- to C-terminus: tRNA-splicing endonuclease (177 aa).

Catalysis depends on residues Y114, H123, and K154.

The protein belongs to the tRNA-intron endonuclease family. Archaeal short subfamily. Homotetramer; although the tetramer contains four active sites, only two participate in the cleavage. Therefore, it should be considered as a dimer of dimers.

It carries out the reaction pretRNA = a 3'-half-tRNA molecule with a 5'-OH end + a 5'-half-tRNA molecule with a 2',3'-cyclic phosphate end + an intron with a 2',3'-cyclic phosphate and a 5'-hydroxyl terminus.. Functionally, endonuclease that removes tRNA introns. Cleaves pre-tRNA at the 5'- and 3'-splice sites to release the intron. The products are an intron and two tRNA half-molecules bearing 2',3' cyclic phosphate and 5'-OH termini. Recognizes a pseudosymmetric substrate in which 2 bulged loops of 3 bases are separated by a stem of 4 bp. The sequence is that of tRNA-splicing endonuclease from Methanococcus vannielii (strain ATCC 35089 / DSM 1224 / JCM 13029 / OCM 148 / SB).